A 369-amino-acid polypeptide reads, in one-letter code: Histidinol-phosphate aminotransferase (369 aa).

Lys-222 is modified (N6-(pyridoxal phosphate)lysine).

It belongs to the class-II pyridoxal-phosphate-dependent aminotransferase family. Histidinol-phosphate aminotransferase subfamily. In terms of assembly, homodimer. It depends on pyridoxal 5'-phosphate as a cofactor.

It carries out the reaction L-histidinol phosphate + 2-oxoglutarate = 3-(imidazol-4-yl)-2-oxopropyl phosphate + L-glutamate. Its pathway is amino-acid biosynthesis; L-histidine biosynthesis; L-histidine from 5-phospho-alpha-D-ribose 1-diphosphate: step 7/9. The sequence is that of Histidinol-phosphate aminotransferase from Halalkalibacterium halodurans (strain ATCC BAA-125 / DSM 18197 / FERM 7344 / JCM 9153 / C-125) (Bacillus halodurans).